Consider the following 222-residue polypeptide: Cytidylate kinase (222 aa).

9–17 (GPSGAGKST) is a binding site for ATP.

Belongs to the cytidylate kinase family. Type 1 subfamily.

The protein resides in the cytoplasm. The enzyme catalyses CMP + ATP = CDP + ADP. It catalyses the reaction dCMP + ATP = dCDP + ADP. The sequence is that of Cytidylate kinase from Thermodesulfovibrio yellowstonii (strain ATCC 51303 / DSM 11347 / YP87).